A 288-amino-acid chain; its full sequence is Rhox homeobox family member 2B (288 aa).

The disordered stretch occupies residues 16-136 (SPAVDDEKEL…GLEPGNAQQP (121 aa)). Residues 39-48 (VKEEEEDAQP) are compositionally biased toward acidic residues. A compositionally biased stretch (basic and acidic residues) spans 68–80 (GEEKDGGGEEKDG). Positions 134 to 193 (QQPNVHAFTPLQLQELECIFQREQFPSEFLRRRLARSMNVTELAVQIWFENRRAKWRRHQ) form a DNA-binding region, homeobox. The Nuclear localization signal motif lies at 186–195 (RAKWRRHQRA).

This sequence belongs to the paired-like homeobox family. PEPP subfamily. Expressed in testis, mainly expressed in germ cells, but also detected in somatic cells such as Sertoli cells, Leydig cells and peritubular cells.

It localises to the nucleus. Its function is as follows. Transcription factor maybe involved in reproductive processes. Modulates expression of target genes encoding proteins involved in processes relevant to spermatogenesis. The sequence is that of Rhox homeobox family member 2B from Homo sapiens (Human).